Reading from the N-terminus, the 488-residue chain is R3H and coiled-coil domain-containing protein 1 (488 aa).

One can recognise an R3H domain in the interval 16–81; sequence NDFVHRVQEE…KRRTVICHLD (66 aa). Disordered stretches follow at residues 87-180 and 195-322; these read SDGP…GDAE and KSPD…DADH. The span at 114-125 shows a compositional bias: low complexity; sequence GAAAGPRGAPAG. Phosphoserine is present on Ser232. Residues 244–321 adopt a coiled-coil conformation; it reads SHGMRSLVDQ…EEDEDEADAD (78 aa). A compositionally biased stretch (acidic residues) spans 252–265; it reads DQEEEEIEGEEEEK. 2 stretches are compositionally biased toward basic and acidic residues: residues 266–280 and 287–301; these read VDEK…KERV and TDAQ…GERM. Positions 302 to 319 are enriched in acidic residues; it reads DEGEDKVDAEEEDEDEAD.

This Mus musculus (Mouse) protein is R3H and coiled-coil domain-containing protein 1.